The following is a 240-amino-acid chain: Sugar fermentation stimulation protein homolog (240 aa).

Belongs to the SfsA family.

The chain is Sugar fermentation stimulation protein homolog from Pasteurella multocida (strain Pm70).